We begin with the raw amino-acid sequence, 325 residues long: Probable isoaspartyl peptidase/L-asparaginase GA20639 (325 aa).

Catalysis depends on T184, which acts as the Nucleophile. Substrate is bound by residues 212-215 (RIGD) and 235-238 (TGHG).

It belongs to the Ntn-hydrolase family. In terms of assembly, heterodimer of an alpha and beta chain produced by autocleavage. In terms of processing, cleaved into an alpha and beta chain by autocatalysis; this activates the enzyme. The N-terminal residue of the beta subunit is responsible for the nucleophile hydrolase activity.

The catalysed reaction is L-asparagine + H2O = L-aspartate + NH4(+). It catalyses the reaction Cleavage of a beta-linked Asp residue from the N-terminus of a polypeptide.. Has both L-asparaginase and beta-aspartyl peptidase activity. Does not have aspartylglucosaminidase activity and is inactive toward GlcNAc-L-Asn. Likewise, has no activity toward glutamine. In Drosophila pseudoobscura pseudoobscura (Fruit fly), this protein is Probable isoaspartyl peptidase/L-asparaginase GA20639.